A 214-amino-acid chain; its full sequence is MAGEADGKAPLGSRYPPAALNERILSSMSQKHVAAHPWHDLEIGPGAPAVFNCVVEIPRGSKVKYELDKATGLIKVDRVLYSSVVYPHNYGFIPRTLCEDGDPMDVLVLMQEQVVPGCFLRARAIGLMPMIDQGEKDDKIIAVCADDPEYRHFRDIKEIPPHRLQEIRRFFEDYKKNENKEVAVNEFLPAEDAINAIKYSMDLYGAYIIESLRK.

Residues lysine 64, arginine 78, and tyrosine 90 each contribute to the substrate site. Mg(2+) is bound by residues aspartate 100, aspartate 105, and aspartate 137. A substrate-binding site is contributed by tyrosine 174.

Belongs to the PPase family. The cofactor is Mg(2+).

The protein localises to the cytoplasm. The catalysed reaction is diphosphate + H2O = 2 phosphate + H(+). In Oryza sativa subsp. indica (Rice), this protein is Soluble inorganic pyrophosphatase (IPP).